The primary structure comprises 265 residues: Phosphate import ATP-binding protein PstB 2 (265 aa).

Residues 13–260 enclose the ABC transporter domain; it reads FRTENLNVYY…PTKQATRDYV (248 aa). 45-52 is a binding site for ATP; sequence GPSGCGKS.

Belongs to the ABC transporter superfamily. Phosphate importer (TC 3.A.1.7) family. In terms of assembly, the complex is composed of two ATP-binding proteins (PstB), two transmembrane proteins (PstC and PstA) and a solute-binding protein (PstS).

Its subcellular location is the cell inner membrane. The enzyme catalyses phosphate(out) + ATP + H2O = ADP + 2 phosphate(in) + H(+). Part of the ABC transporter complex PstSACB involved in phosphate import. Responsible for energy coupling to the transport system. The protein is Phosphate import ATP-binding protein PstB 2 of Synechococcus sp. (strain JA-3-3Ab) (Cyanobacteria bacterium Yellowstone A-Prime).